A 308-amino-acid polypeptide reads, in one-letter code: Alpha/beta hydrolase domain-containing protein WAV2 (308 aa).

A helical membrane pass occupies residues 6–26 (SALFYGFGGIVVAGVALLVAF). Catalysis depends on charge relay system residues serine 159, aspartate 243, and arginine 308.

This sequence belongs to the serine esterase family. As to expression, expressed in roots, rosette leaves, stems and flowers.

The protein resides in the cell membrane. Its function is as follows. Involved in the regulation of root growth. Involved in the suppression of the root bending in response to touch stimuli, gravity and light. Negatively regulates stimulus-induced root bending through inhibition of root tip rotation. In Arabidopsis thaliana (Mouse-ear cress), this protein is Alpha/beta hydrolase domain-containing protein WAV2.